The following is a 323-amino-acid chain: Global nitrogen regulator NrpRI (323 aa).

Positions 11-76 (IEIMRVIHES…TLTDLGENEM (66 aa)) are winged helix-turn-helix. Residues 86 to 323 (GFVISRIEEM…MLDYQTMKEI (238 aa)) form an NRD region.

The protein belongs to the NrpR family. As to quaternary structure, forms a complex with NrpRII and the general archaeal transcription factors TBP and TFB. Interacts directly with NrpRII.

Its activity is regulated as follows. Under nitrogen limitation, binding of 2-oxoglutarate to the NrpRI/NrpRII complex decreases the binding affinity of NrpRI to DNA as well as the binding affinity of NrpRII to TBP and TFB, which leads to removal of the complex from the operator, RNA polymerase recruitment and initiation of transcription. In terms of biological role, plays a major role in nitrogen regulation. Under nitrogen sufficiency, binds to the nifH and the glnk1 promoters, leading to repression of the transcription of the genes. This Methanosarcina mazei (strain ATCC BAA-159 / DSM 3647 / Goe1 / Go1 / JCM 11833 / OCM 88) (Methanosarcina frisia) protein is Global nitrogen regulator NrpRI.